The sequence spans 68 residues: Dermaseptin-H5 (68 aa).

A signal peptide spans K1–C17. The propeptide occupies E18–M38. Residues E19 to R40 form a disordered region. The span at E25–Q35 shows a compositional bias: acidic residues. L65 carries the leucine amide modification. A propeptide spanning residues E67 to Q68 is cleaved from the precursor.

As to expression, expressed by the skin glands.

The protein resides in the secreted. Functionally, has antibacterial activity against the Gram-negative bacteria E.coli ATCC 11775 (MIC=0.5 uM), and the Gram-positive bacteria S.aureus ATCC 12600 (MIC=0.5 uM) and M.luteus ATCC 49732 (MIC=2.0 uM). Does not inhibit the growth of the fungus C.albicans. Probably acts by disturbing membrane functions with its amphipathic structure. This chain is Dermaseptin-H5, found in Pithecopus azureus (Orange-legged monkey tree frog).